Consider the following 205-residue polypeptide: Small ribosomal subunit protein uS4 (205 aa).

Residues M1–G16 show a composition bias toward basic and acidic residues. Positions M1–S46 are disordered. Residues S94 to V157 form the S4 RNA-binding domain.

The protein belongs to the universal ribosomal protein uS4 family. In terms of assembly, part of the 30S ribosomal subunit. Contacts protein S5. The interaction surface between S4 and S5 is involved in control of translational fidelity.

One of the primary rRNA binding proteins, it binds directly to 16S rRNA where it nucleates assembly of the body of the 30S subunit. In terms of biological role, with S5 and S12 plays an important role in translational accuracy. This Sinorhizobium medicae (strain WSM419) (Ensifer medicae) protein is Small ribosomal subunit protein uS4.